The primary structure comprises 89 residues: Small ribosomal subunit protein uS14 (89 aa).

The protein belongs to the universal ribosomal protein uS14 family. In terms of assembly, part of the 30S ribosomal subunit. Contacts proteins S3 and S10.

Its function is as follows. Binds 16S rRNA, required for the assembly of 30S particles and may also be responsible for determining the conformation of the 16S rRNA at the A site. The polypeptide is Small ribosomal subunit protein uS14 (Leuconostoc mesenteroides subsp. mesenteroides (strain ATCC 8293 / DSM 20343 / BCRC 11652 / CCM 1803 / JCM 6124 / NCDO 523 / NBRC 100496 / NCIMB 8023 / NCTC 12954 / NRRL B-1118 / 37Y)).